Here is a 332-residue protein sequence, read N- to C-terminus: MSTKEKLINHVMKEEPIGSRNKVTVVGVGMVGMASAVSILLKDLCDELALVDVMEDKLKGEVMDLQHGGLFLKTHKIVGDKDYSVTANSRVVVVTAGARQQEGESRLNLVQRNVNIFKFIIPNIVKYSPNCILMVVSNPVDILTYVAWKLSGFPRHRVIGSGTNLDSARFRHIMGEKLHLHPSSCHGWIVGEHGDSSVPVWSGVNVAGVSLQTLNPKMGAEGDTENWKAVHKMVVDGAYEVIKLKGYTSWAIGMSVADLVESIVKNLHKVHPVSTLVKGMHGVKDEVFLSVPCVLGNSGLTDVIHMTLKPEEEKQLVKSAETLWGVQKELTL.

NAD(+) contacts are provided by residues 29–57 (GMVG…MEDK) and R99. Substrate contacts are provided by R106, N138, and R169. NAD(+) is bound at residue N138. H193 serves as the catalytic Proton acceptor. T248 provides a ligand contact to substrate.

The protein belongs to the LDH/MDH superfamily. LDH family. As to quaternary structure, homotetramer.

Its subcellular location is the cytoplasm. It catalyses the reaction (S)-lactate + NAD(+) = pyruvate + NADH + H(+). Its pathway is fermentation; pyruvate fermentation to lactate; (S)-lactate from pyruvate: step 1/1. In terms of biological role, interconverts simultaneously and stereospecifically pyruvate and lactate with concomitant interconversion of NADH and NAD(+). This Sphyraena idiastes (Pelican barracuda) protein is L-lactate dehydrogenase A chain (ldha).